The chain runs to 281 residues: Probable endonuclease 4 (281 aa).

Positions 69, 109, 145, 179, 182, 216, 229, 231, and 261 each coordinate Zn(2+).

The protein belongs to the AP endonuclease 2 family. Zn(2+) is required as a cofactor.

It carries out the reaction Endonucleolytic cleavage to 5'-phosphooligonucleotide end-products.. Its function is as follows. Endonuclease IV plays a role in DNA repair. It cleaves phosphodiester bonds at apurinic or apyrimidinic (AP) sites, generating a 3'-hydroxyl group and a 5'-terminal sugar phosphate. In Glaesserella parasuis serovar 5 (strain SH0165) (Haemophilus parasuis), this protein is Probable endonuclease 4.